Here is a 394-residue protein sequence, read N- to C-terminus: Small ribosomal subunit protein uS2m (394 aa).

The N-terminal 25 residues, 1-25 (MQRHVFARNFRRLSLLRNPSLTKRF), are a transit peptide targeting the mitochondrion.

This sequence belongs to the universal ribosomal protein uS2 family. As to quaternary structure, component of the mitochondrial small ribosomal subunit (mt-SSU). Mature yeast 74S mitochondrial ribosomes consist of a small (37S) and a large (54S) subunit. The 37S small subunit contains a 15S ribosomal RNA (15S mt-rRNA) and 34 different proteins. The 54S large subunit contains a 21S rRNA (21S mt-rRNA) and 46 different proteins.

The protein localises to the mitochondrion. In terms of biological role, component of the mitochondrial ribosome (mitoribosome), a dedicated translation machinery responsible for the synthesis of mitochondrial genome-encoded proteins, including at least some of the essential transmembrane subunits of the mitochondrial respiratory chain. The mitoribosomes are attached to the mitochondrial inner membrane and translation products are cotranslationally integrated into the membrane. The sequence is that of Small ribosomal subunit protein uS2m (MRP4) from Saccharomyces cerevisiae (strain ATCC 204508 / S288c) (Baker's yeast).